A 208-amino-acid polypeptide reads, in one-letter code: Glycerol-3-phosphate acyltransferase (208 aa).

6 helical membrane-spanning segments follow: residues 7 to 27 (PNIH…GYLL), 63 to 83 (MMAA…ILVA), 86 to 106 (AGMS…GHCF), 123 to 143 (GVMA…WLVV), 149 to 169 (ISSL…FLIH), and 170 to 190 (PEIP…VIFY).

The protein belongs to the PlsY family. In terms of assembly, probably interacts with PlsX.

The protein resides in the cell inner membrane. It catalyses the reaction an acyl phosphate + sn-glycerol 3-phosphate = a 1-acyl-sn-glycero-3-phosphate + phosphate. It functions in the pathway lipid metabolism; phospholipid metabolism. Functionally, catalyzes the transfer of an acyl group from acyl-phosphate (acyl-PO(4)) to glycerol-3-phosphate (G3P) to form lysophosphatidic acid (LPA). This enzyme utilizes acyl-phosphate as fatty acyl donor, but not acyl-CoA or acyl-ACP. The chain is Glycerol-3-phosphate acyltransferase from Wolinella succinogenes (strain ATCC 29543 / DSM 1740 / CCUG 13145 / JCM 31913 / LMG 7466 / NCTC 11488 / FDC 602W) (Vibrio succinogenes).